A 491-amino-acid chain; its full sequence is Cytochrome P450 2B9 (491 aa).

Residue serine 128 is modified to Phosphoserine; by PKA. Cysteine 436 contacts heme.

The protein belongs to the cytochrome P450 family. Heme is required as a cofactor.

It is found in the endoplasmic reticulum membrane. The protein resides in the microsome membrane. The catalysed reaction is an organic molecule + reduced [NADPH--hemoprotein reductase] + O2 = an alcohol + oxidized [NADPH--hemoprotein reductase] + H2O + H(+). Its function is as follows. Cytochromes P450 are a group of heme-thiolate monooxygenases. In liver microsomes, this enzyme is involved in an NADPH-dependent electron transport pathway. It oxidizes a variety of structurally unrelated compounds, including steroids, fatty acids, and xenobiotics. The protein is Cytochrome P450 2B9 (Cyp2b9) of Mus musculus (Mouse).